We begin with the raw amino-acid sequence, 93 residues long: Cell division topological specificity factor (93 aa).

The protein belongs to the MinE family.

Its function is as follows. Prevents the cell division inhibition by proteins MinC and MinD at internal division sites while permitting inhibition at polar sites. This ensures cell division at the proper site by restricting the formation of a division septum at the midpoint of the long axis of the cell. The polypeptide is Cell division topological specificity factor (Synechococcus sp. (strain WH7803)).